The following is a 437-amino-acid chain: Ribosomal protein uS12 methylthiotransferase RimO (437 aa).

Residues 9–125 (PAIFLLSLGC…VLAAIGAHYC (117 aa)) enclose the MTTase N-terminal domain. [4Fe-4S] cluster is bound by residues Cys-18, Cys-54, Cys-88, Cys-149, Cys-153, and Cys-156. Positions 135-364 (LTPPHYAFLK…MELQESIAAS (230 aa)) constitute a Radical SAM core domain. The region spanning 367-434 (RKLEGQTLTV…AYELFGRVGS (68 aa)) is the TRAM domain.

The protein belongs to the methylthiotransferase family. RimO subfamily. The cofactor is [4Fe-4S] cluster.

It is found in the cytoplasm. It catalyses the reaction L-aspartate(89)-[ribosomal protein uS12]-hydrogen + (sulfur carrier)-SH + AH2 + 2 S-adenosyl-L-methionine = 3-methylsulfanyl-L-aspartate(89)-[ribosomal protein uS12]-hydrogen + (sulfur carrier)-H + 5'-deoxyadenosine + L-methionine + A + S-adenosyl-L-homocysteine + 2 H(+). Its function is as follows. Catalyzes the methylthiolation of an aspartic acid residue of ribosomal protein uS12. The polypeptide is Ribosomal protein uS12 methylthiotransferase RimO (Chlorobaculum parvum (strain DSM 263 / NCIMB 8327) (Chlorobium vibrioforme subsp. thiosulfatophilum)).